A 282-amino-acid polypeptide reads, in one-letter code: MSVATPRAFVVGHPIAHSRSPLIHGHWLAVHGIPGSYERLDVPPAAFPDFVRGLPDSGFRGGNVTIPHKEAAFALADTLTPRARAIGAVNTLVVGPDGRIRGDNTDAPGFCAHLDHSLGAAWPERAGGTALVLGAGGAARAVVVGLAERGLRRVWVANRTAARAEAVAALAPGVGAALAWDDLPAALPGTGLLVNTTSLGMKGQPPLAVDLSPLPADAAVADIVYAPLETALLAAARRRGLAAVDGLGMLLHQAVPGFEAWFGPRPRVTPELRDRIVADLAG.

Shikimate is bound by residues 18–20 (SRS) and Thr65. Residue Lys69 is the Proton acceptor of the active site. Residues Asn90 and Asp106 each coordinate shikimate. Residues 134-138 (GAGGA), 158-163 (NRTAAR), and Ile223 each bind NADP(+). Tyr225 provides a ligand contact to shikimate. Gly246 is an NADP(+) binding site.

The protein belongs to the shikimate dehydrogenase family. In terms of assembly, homodimer.

The enzyme catalyses shikimate + NADP(+) = 3-dehydroshikimate + NADPH + H(+). Its pathway is metabolic intermediate biosynthesis; chorismate biosynthesis; chorismate from D-erythrose 4-phosphate and phosphoenolpyruvate: step 4/7. Involved in the biosynthesis of the chorismate, which leads to the biosynthesis of aromatic amino acids. Catalyzes the reversible NADPH linked reduction of 3-dehydroshikimate (DHSA) to yield shikimate (SA). In Methylobacterium radiotolerans (strain ATCC 27329 / DSM 1819 / JCM 2831 / NBRC 15690 / NCIMB 10815 / 0-1), this protein is Shikimate dehydrogenase (NADP(+)).